Consider the following 283-residue polypeptide: Non-selective voltage-gated ion channel VDAC1 (283 aa).

Alanine 2 is subject to N-acetylalanine. Lysine 12 lines the ATP pocket. A Glycyl lysine isopeptide (Lys-Gly) (interchain with G-Cter in ubiquitin) cross-link involves residue lysine 12. At serine 13 the chain carries Phosphoserine. Threonine 19 carries the phosphothreonine modification. Lysine 20 contributes to the ATP binding site. At lysine 20 the chain carries N6-acetyllysine; alternate. Lysine 20 carries the post-translational modification N6-succinyllysine; alternate. Residue lysine 20 forms a Glycyl lysine isopeptide (Lys-Gly) (interchain with G-Cter in ubiquitin); alternate linkage. Beta stranded transmembrane passes span 26 to 35 (LIKLDLKTKS) and 39 to 47 (LEFTSSGSA). Glycyl lysine isopeptide (Lys-Gly) (interchain with G-Cter in ubiquitin) cross-links involve residues lysine 53 and lysine 61. The chain crosses the membrane as a beta stranded span at residues 54–64 (VTGSLETKYRW). Tyrosine 67 is subject to Phosphotyrosine. Transmembrane regions (beta stranded) follow at residues 69 to 76 (LTFTEKWN), 80 to 89 (TLGTEITVED), and 95 to 104 (LKLTFDSSFS). Position 107 is a phosphothreonine (threonine 107). Lysine 109 carries the post-translational modification N6-acetyllysine; alternate. Lysine 109 participates in a covalent cross-link: Glycyl lysine isopeptide (Lys-Gly) (interchain with G-Cter in ubiquitin); alternate. A Glycyl lysine isopeptide (Lys-Gly) (interchain with G-Cter in ubiquitin) cross-link involves residue lysine 110. 4 beta stranded membrane-spanning segments follow: residues 111-120 (NAKIKTGYKR), 123-130 (INLGCDVD), 137-145 (SIRGALVLG), and 150-158 (LAGYQMNFE). A Glycyl lysine isopeptide (Lys-Gly) (interchain with G-Cter in ubiquitin) cross-link involves residue lysine 161. The next 6 membrane-spanning stretches (beta stranded) occupy residues 163-175 (RVTQ…GYKT), 178-185 (FQLHTNVN), 189-198 (EFGGSIYQKV), 202-211 (LETAVNLAWT), 218-227 (RFGIAAKYQI), and 231-238 (ACFSAKVN). Serine 193 is modified (phosphoserine; by NEK1). At serine 240 the chain carries Phosphoserine. NAD(+) is bound at residue 242–244 (LIG). The beta stranded transmembrane segment at 242 to 251 (LIGLGYTQTL) threads the bilayer. At lysine 252 the chain carries N6-acetyllysine. The chain crosses the membrane as a beta stranded span at residues 254–263 (GIKLTLSALL). 260–264 (SALLD) lines the NAD(+) pocket. Position 266 is an N6-acetyllysine; alternate (lysine 266). Lysine 266 participates in a covalent cross-link: Glycyl lysine isopeptide (Lys-Gly) (interchain with G-Cter in ubiquitin); alternate. The beta stranded transmembrane segment at 273–282 (HKLGLGLEFQ) threads the bilayer. Lysine 274 participates in a covalent cross-link: Glycyl lysine isopeptide (Lys-Gly) (interchain with G-Cter in ubiquitin).

This sequence belongs to the eukaryotic mitochondrial porin family. In terms of assembly, homodimer and homotrimer; in response to cyclic AMP or calcium; oligomerization is required for scramblase activity. Component of the mitochondrial permeability transition pore complex (mPTPC), at least composed of SPG7, VDAC1 and PPIF. Interacts with SPG7, NIPSNAP2 and SLC25A30. Interacts with hexokinases including HK1. The HK1-VDAC1 complex interacts with ATF2. Interacts with BCL2L1. Interacts with BAK1. Interacts with RTL10/BOP (via BH3 domain). Interacts with amyloid-beta and APP; induces VDAC1 dephosphorylation. Interacts with TMEM41B. Interacts with BCAP31. Interacts with HSPA9; this interaction couples ITPR1 to VDAC1. Post-translationally, phosphorylation at Ser-193 by NEK1 promotes the closed conformational state preventing excessive mitochondrial membrane permeability and subsequent apoptotic cell death after injury. Phosphorylation by the AKT-GSK3B axis stabilizes the protein probably by preventing ubiquitin-mediated proteasomal degradation. Ubiquitinated. Undergoes monoubiquitination and polyubiquitination by PRKN; monoubiquitination at Lys-274 inhibits apoptosis, whereas polyubiquitination leads to its degradation and promotes mitophagy. Deubiquitinated by USP30. Predominantly in brain astrocytes.

The protein localises to the mitochondrion outer membrane. It localises to the cell membrane. The protein resides in the membrane raft. It carries out the reaction chloride(in) = chloride(out). The enzyme catalyses K(+)(in) = K(+)(out). It catalyses the reaction ATP(in) = ATP(out). The catalysed reaction is Ca(2+)(in) = Ca(2+)(out). It carries out the reaction Na(+)(in) = Na(+)(out). The enzyme catalyses Mg(2+)(in) = Mg(2+)(out). It catalyses the reaction L-glutamate(out) = L-glutamate(in). The catalysed reaction is dopamine(out) = dopamine(in). It carries out the reaction acetylcholine(in) = acetylcholine(out). The enzyme catalyses Fe(III)-[cytochrome c](out) = Fe(III)-[cytochrome c](in). It catalyses the reaction a 1,2-diacyl-sn-glycero-3-phosphocholine(in) = a 1,2-diacyl-sn-glycero-3-phosphocholine(out). The catalysed reaction is a 1,2-diacyl-sn-glycero-3-phospho-L-serine(in) = a 1,2-diacyl-sn-glycero-3-phospho-L-serine(out). Inhibited by nitric oxide. Functionally, non-selective voltage-gated ion channel that mediates the transport of anions and cations through the mitochondrion outer membrane and plasma membrane. The channel at the outer mitochondrial membrane allows diffusion of small hydrophilic molecules; in the plasma membrane it is involved in cell volume regulation and apoptosis. It adopts an open conformation at low or zero membrane potential and a closed conformation at potentials above 30-40 mV. The open state has a weak anion selectivity whereas the closed state is cation-selective. Binds various signaling molecules, including the sphingolipid ceramide, the phospholipid phosphatidylcholine, and the sterols cholesterol and oxysterol. In depolarized mitochondria, acts downstream of PRKN and PINK1 to promote mitophagy or prevent apoptosis; polyubiquitination by PRKN promotes mitophagy, while monoubiquitination by PRKN decreases mitochondrial calcium influx which ultimately inhibits apoptosis. May participate in the formation of the permeability transition pore complex (PTPC) responsible for the release of mitochondrial products that triggers apoptosis. May mediate ATP export from cells. Part of a complex composed of HSPA9, ITPR1 and VDAC1 that regulates mitochondrial calcium-dependent apoptosis by facilitating calcium transport from the ER lumen to the mitochondria intermembrane space thus providing calcium for the downstream calcium channel MCU that directly releases it into mitochondria matrix. Mediates cytochrome c efflux. Catalyzes the scrambling of phospholipids across the outer mitochondrial membrane; the mechanism is unrelated to channel activity and is capable of translocating both anionic and zwitterionic phospholipids. This chain is Non-selective voltage-gated ion channel VDAC1, found in Bos taurus (Bovine).